We begin with the raw amino-acid sequence, 419 residues long: Histidine--tRNA ligase (419 aa).

Belongs to the class-II aminoacyl-tRNA synthetase family. In terms of assembly, homodimer.

It is found in the cytoplasm. The catalysed reaction is tRNA(His) + L-histidine + ATP = L-histidyl-tRNA(His) + AMP + diphosphate + H(+). This Caldicellulosiruptor saccharolyticus (strain ATCC 43494 / DSM 8903 / Tp8T 6331) protein is Histidine--tRNA ligase.